Reading from the N-terminus, the 954-residue chain is Glycine dehydrogenase (decarboxylating) (954 aa).

K706 is modified (N6-(pyridoxal phosphate)lysine).

It belongs to the GcvP family. The glycine cleavage system is composed of four proteins: P, T, L and H. It depends on pyridoxal 5'-phosphate as a cofactor.

The catalysed reaction is N(6)-[(R)-lipoyl]-L-lysyl-[glycine-cleavage complex H protein] + glycine + H(+) = N(6)-[(R)-S(8)-aminomethyldihydrolipoyl]-L-lysyl-[glycine-cleavage complex H protein] + CO2. The glycine cleavage system catalyzes the degradation of glycine. The P protein binds the alpha-amino group of glycine through its pyridoxal phosphate cofactor; CO(2) is released and the remaining methylamine moiety is then transferred to the lipoamide cofactor of the H protein. This chain is Glycine dehydrogenase (decarboxylating), found in Pseudomonas savastanoi pv. phaseolicola (strain 1448A / Race 6) (Pseudomonas syringae pv. phaseolicola (strain 1448A / Race 6)).